Reading from the N-terminus, the 637-residue chain is MTSTIDKNGAAESRVFEADVAKLLQMMVHSVYSDKDVFLRELISNAADACERLRYEAISDPALLTDETRPRISITIDAERRQLAVEDNGIGMGRDELVDALGTIARSGTKAFIEQAEAAESGDGVALIGQFGVGFYSAFMVADQVDVVSRRAGAREAWRWSSDGKGTFTVTPVDESEAPARGTRVTLHLTEDATGYTDRLKIEQMIKEQSGHVPVPIALIEKPGAEPAEIADGAALWTRPRGEISASEYADFYRSVAGQFDEPALTVHFRAEGRQEFTALLFVPQTRPFDLFEPDKKRQLKLYVRRVFITEDADLLPRYLRFVRGVVDSADLPLNISREMIQESPILAAIKKSITGRILSELEKLADKDAQAYGKIWEAFGPMFKEGIYDAADRRDTVLGLSRFRTTAGSLRSLKDYVGALKENQTSIYYLAGQDAARLEASPHLEGFRARGVEVLLLSDPVDSFWVTSGPSFEGKPFKSVTQGAADLAAIPRLDAGTEPSPDVSEGVTEFLAFLKTTLSDLVSDVRSSDRLTDSPVCLVAAESGPDRQLEKILLGVGQLAGASKPVLEVNPNHPLVASLAALGQDDREFKEDAARMLLDDARVLDGDRPSDALEFSRRLIRLVERGLRRSSAGGGD.

An a; substrate-binding region spans residues 1-338 (MTSTIDKNGA…SADLPLNISR (338 aa)). Positions 339–552 (EMIQESPILA…ESGPDRQLEK (214 aa)) are b. Positions 553–637 (ILLGVGQLAG…LRRSSAGGGD (85 aa)) are c.

This sequence belongs to the heat shock protein 90 family. In terms of assembly, homodimer.

It localises to the cytoplasm. Functionally, molecular chaperone. Has ATPase activity. This Nitrobacter winogradskyi (strain ATCC 25391 / DSM 10237 / CIP 104748 / NCIMB 11846 / Nb-255) protein is Chaperone protein HtpG.